A 962-amino-acid chain; its full sequence is Glycine dehydrogenase (decarboxylating) (962 aa).

An N6-(pyridoxal phosphate)lysine modification is found at lysine 709.

It belongs to the GcvP family. The glycine cleavage system is composed of four proteins: P, T, L and H. Requires pyridoxal 5'-phosphate as cofactor.

The enzyme catalyses N(6)-[(R)-lipoyl]-L-lysyl-[glycine-cleavage complex H protein] + glycine + H(+) = N(6)-[(R)-S(8)-aminomethyldihydrolipoyl]-L-lysyl-[glycine-cleavage complex H protein] + CO2. In terms of biological role, the glycine cleavage system catalyzes the degradation of glycine. The P protein binds the alpha-amino group of glycine through its pyridoxal phosphate cofactor; CO(2) is released and the remaining methylamine moiety is then transferred to the lipoamide cofactor of the H protein. The polypeptide is Glycine dehydrogenase (decarboxylating) (Shewanella sp. (strain ANA-3)).